The primary structure comprises 280 residues: 2,3,4,5-tetrahydropyridine-2,6-dicarboxylate N-succinyltransferase (280 aa).

Substrate contacts are provided by Arg107 and Asp144.

The protein belongs to the transferase hexapeptide repeat family. Homotrimer.

The protein localises to the cytoplasm. The enzyme catalyses (S)-2,3,4,5-tetrahydrodipicolinate + succinyl-CoA + H2O = (S)-2-succinylamino-6-oxoheptanedioate + CoA. It functions in the pathway amino-acid biosynthesis; L-lysine biosynthesis via DAP pathway; LL-2,6-diaminopimelate from (S)-tetrahydrodipicolinate (succinylase route): step 1/3. This Paramagnetospirillum magneticum (strain ATCC 700264 / AMB-1) (Magnetospirillum magneticum) protein is 2,3,4,5-tetrahydropyridine-2,6-dicarboxylate N-succinyltransferase.